The sequence spans 677 residues: DNA ligase (677 aa).

NAD(+)-binding positions include 35-39, 84-85, and E116; these read DAEYD and SL. K118 (N6-AMP-lysine intermediate) is an active-site residue. NAD(+)-binding residues include R139, E176, K295, and K319. C413, C416, C431, and C437 together coordinate Zn(2+). Residues 596–677 enclose the BRCT domain; sequence LDELPLAGQV…MLAMFADLEG (82 aa).

Belongs to the NAD-dependent DNA ligase family. LigA subfamily. Requires Mg(2+) as cofactor. Mn(2+) is required as a cofactor.

The enzyme catalyses NAD(+) + (deoxyribonucleotide)n-3'-hydroxyl + 5'-phospho-(deoxyribonucleotide)m = (deoxyribonucleotide)n+m + AMP + beta-nicotinamide D-nucleotide.. DNA ligase that catalyzes the formation of phosphodiester linkages between 5'-phosphoryl and 3'-hydroxyl groups in double-stranded DNA using NAD as a coenzyme and as the energy source for the reaction. It is essential for DNA replication and repair of damaged DNA. The protein is DNA ligase of Pseudoalteromonas atlantica (strain T6c / ATCC BAA-1087).